Reading from the N-terminus, the 435-residue chain is GPI-anchor transamidase component PIGU (435 aa).

At methionine 1 to alanine 3 the chain is on the cytoplasmic side. The helical transmembrane segment at proline 4–serine 22 threads the bilayer. The Lumenal segment spans residues serine 23 to aspartate 78. Residues tyrosine 79–isoleucine 99 traverse the membrane as a helical segment. Topologically, residues glutamine 100–isoleucine 136 are cytoplasmic. The next 4 membrane-spanning stretches (helical) occupy residues proline 137–serine 158, threonine 159–serine 178, valine 179–leucine 194, and tyrosine 195–leucine 205. Residues tyrosine 206–phenylalanine 222 are Cytoplasmic-facing. Lysine 216 contributes to the a cardiolipin binding site. Residues tryptophan 223 to serine 244 form a helical membrane-spanning segment. Residues phenylalanine 245–serine 286 are Lumenal-facing. Residues leucine 287 to isoleucine 306 traverse the membrane as a helical segment. At lysine 307 to histidine 311 the chain is on the cytoplasmic side. Position 309 (lysine 309) interacts with a cardiolipin. Transmembrane regions (helical) follow at residues proline 312–threonine 331 and valine 332–tryptophan 345. Over asparagine 346–asparagine 354 the chain is Cytoplasmic. A helical transmembrane segment spans residues valine 355–leucine 372. Residues tryptophan 373–serine 384 are Lumenal-facing. 2 residues coordinate a 2-acyl-6-[6-phosphoethanolamine-alpha-D-mannosyl-(1-&gt;2)-6-phosphoethanolamine-alpha-D-mannosyl-(1-&gt;6)-2-phosphoethanolamine-alpha-D-mannosyl-(1-&gt;4)-alpha-D-glucosaminyl]-1-(1-radyl,2-acyl-sn-glycero-3-phospho)-1D-myo-inositol: asparagine 383 and asparagine 385. A helical membrane pass occupies residues asparagine 385–phenylalanine 406. The Cytoplasmic portion of the chain corresponds to tyrosine 407–lysine 435.

This sequence belongs to the PIGU family. Heteropentamer. Part of the GPI-anchor transamidase complex, consisting of PIGK, PIGT, PIGS, PIGU and GAA1.

It localises to the endoplasmic reticulum membrane. Its pathway is glycolipid biosynthesis; glycosylphosphatidylinositol-anchor biosynthesis. In terms of biological role, component of the glycosylphosphatidylinositol-anchor (GPI-anchor) transamidase (GPI-T) complex that catalyzes the formation of the linkage between a proprotein and a GPI-anchor and participates in GPI anchored protein biosynthesis. Binds the lipid portion of GPI-anchor. May act as an organizer in the transmembrane layer to recruit other subunits, and thus is essential for assembly of the complex. The chain is GPI-anchor transamidase component PIGU from Cricetulus griseus (Chinese hamster).